Reading from the N-terminus, the 613-residue chain is DNA mismatch repair protein MutL (613 aa).

The tract at residues 364-393 (EPAVARQPEAPRYSSGASAPRPTGANYPHA) is disordered.

This sequence belongs to the DNA mismatch repair MutL/HexB family.

Its function is as follows. This protein is involved in the repair of mismatches in DNA. It is required for dam-dependent methyl-directed DNA mismatch repair. May act as a 'molecular matchmaker', a protein that promotes the formation of a stable complex between two or more DNA-binding proteins in an ATP-dependent manner without itself being part of a final effector complex. This chain is DNA mismatch repair protein MutL, found in Enterobacter sp. (strain 638).